Reading from the N-terminus, the 436-residue chain is Xylose isomerase (436 aa).

Active-site residues include His-100 and Asp-103. Mg(2+) contacts are provided by Glu-231, Glu-267, His-270, Asp-295, Asp-306, Asp-308, and Asp-338.

It belongs to the xylose isomerase family. As to quaternary structure, homotetramer. It depends on Mg(2+) as a cofactor.

It is found in the cytoplasm. The catalysed reaction is alpha-D-xylose = alpha-D-xylulofuranose. This chain is Xylose isomerase, found in Chelativorans sp. (strain BNC1).